The following is a 172-amino-acid chain: RNA silencing suppressor p19 (172 aa).

A disordered region spans residues Glu-153 to Glu-172.

Belongs to the tombusvirus protein p19 family. In terms of assembly, homodimer.

Functionally, viral suppressor of RNA silencing which binds specifically to silencing RNAs (siRNAs). Acts as a molecular caliper to specifically select siRNAs based on the length of the duplex region of the RNA. This Pelargonium zonale (PeNSV) protein is RNA silencing suppressor p19.